An 844-amino-acid chain; its full sequence is Probable serine/threonine-protein kinase DDB_G0267566 (844 aa).

ANK repeat units lie at residues 335-367 (KGDT…NANI) and 371-400 (KHKV…KPFL). The region spanning 508–773 (SELGKLIGKG…FEVFQKLKKV (266 aa)) is the Protein kinase domain. Residues 514-522 (IGKGANGKV) and lysine 539 each bind ATP. Aspartate 634 serves as the catalytic Proton acceptor.

It belongs to the protein kinase superfamily. Ser/Thr protein kinase family.

It catalyses the reaction L-seryl-[protein] + ATP = O-phospho-L-seryl-[protein] + ADP + H(+). The enzyme catalyses L-threonyl-[protein] + ATP = O-phospho-L-threonyl-[protein] + ADP + H(+). This chain is Probable serine/threonine-protein kinase DDB_G0267566, found in Dictyostelium discoideum (Social amoeba).